A 486-amino-acid polypeptide reads, in one-letter code: Inosine-5'-monophosphate dehydrogenase (486 aa).

2 consecutive CBS domains span residues 99-154 (IVED…LVKE) and 156-215 (MTKE…VRDE). NAD(+) is bound by residues Asp247 and 294–296 (GIG). Residues Gly296 and Gly298 each contribute to the K(+) site. Ser299 is a binding site for IMP. Cys301 is a K(+) binding site. Cys301 serves as the catalytic Thioimidate intermediate. IMP is bound by residues 334-336 (DGG), 357-358 (GN), and 381-385 (YRGMG). Arg397 serves as the catalytic Proton acceptor. Glu412 provides a ligand contact to IMP. K(+)-binding residues include Glu466, Ser467, and His468.

Belongs to the IMPDH/GMPR family. In terms of assembly, homotetramer. Requires K(+) as cofactor.

It carries out the reaction IMP + NAD(+) + H2O = XMP + NADH + H(+). It participates in purine metabolism; XMP biosynthesis via de novo pathway; XMP from IMP: step 1/1. Its activity is regulated as follows. Mycophenolic acid (MPA) is a non-competitive inhibitor that prevents formation of the closed enzyme conformation by binding to the same site as the amobile flap. In contrast, mizoribine monophosphate (MZP) is a competitive inhibitor that induces the closed conformation. MPA is a potent inhibitor of mammalian IMPDHs but a poor inhibitor of the bacterial enzymes. MZP is a more potent inhibitor of bacterial IMPDH. In terms of biological role, catalyzes the conversion of inosine 5'-phosphate (IMP) to xanthosine 5'-phosphate (XMP), the first committed and rate-limiting step in the de novo synthesis of guanine nucleotides, and therefore plays an important role in the regulation of cell growth. This is Inosine-5'-monophosphate dehydrogenase from Pyrococcus horikoshii (strain ATCC 700860 / DSM 12428 / JCM 9974 / NBRC 100139 / OT-3).